The sequence spans 382 residues: Low-specificity L-threonine aldolase (382 aa).

K214 is subject to N6-(pyridoxal phosphate)lysine.

Belongs to the threonine aldolase family. As to quaternary structure, homotetramer. It depends on pyridoxal 5'-phosphate as a cofactor.

It catalyses the reaction L-threonine = acetaldehyde + glycine. The catalysed reaction is L-allo-threonine = acetaldehyde + glycine. Its pathway is amino-acid degradation; L-threonine degradation via aldolase pathway; acetaldehyde and glycine from L-threonine: step 1/1. The chain is Low-specificity L-threonine aldolase (GLY1) from Eremothecium gossypii (strain ATCC 10895 / CBS 109.51 / FGSC 9923 / NRRL Y-1056) (Yeast).